The chain runs to 322 residues: GATA transcription factor 8 (322 aa).

The segment at 93 to 168 (TLVEKKEDSF…DKDRVKDNVC (76 aa)) is disordered. The span at 102 to 141 (FSTNTDSSSSHSQFRSSSPVSVLESSSSSSQTTNTTSLVL) shows a compositional bias: low complexity. Residues 144–154 (KHGRPRTKRPR) show a composition bias toward basic residues. The Nuclear localization signal motif lies at 147–154 (RPRTKRPR). The segment at 225–279 (QYPLRKCMHCEVTKTPQWRLGPMGPKTLCNACGVRYKSGRLFPEYRPAASPTFTP) adopts a GATA-type zinc-finger fold.

Belongs to the type IV zinc-finger family. Class A subfamily.

The protein localises to the nucleus. Its function is as follows. Transcriptional activator that specifically binds 5'-GATA-3' or 5'-GAT-3' motifs within gene promoters. May be involved in the regulation of some light-responsive genes. The polypeptide is GATA transcription factor 8 (GATA8) (Arabidopsis thaliana (Mouse-ear cress)).